The chain runs to 218 residues: Large ribosomal subunit protein uL3 (218 aa).

The residue at position 154 (Gln154) is an N5-methylglutamine.

This sequence belongs to the universal ribosomal protein uL3 family. In terms of assembly, part of the 50S ribosomal subunit. Forms a cluster with proteins L14 and L19. Methylated by PrmB.

Its function is as follows. One of the primary rRNA binding proteins, it binds directly near the 3'-end of the 23S rRNA, where it nucleates assembly of the 50S subunit. This Polynucleobacter asymbioticus (strain DSM 18221 / CIP 109841 / QLW-P1DMWA-1) (Polynucleobacter necessarius subsp. asymbioticus) protein is Large ribosomal subunit protein uL3.